The following is a 140-amino-acid chain: Ribonuclease P protein component (140 aa).

The protein belongs to the RnpA family. In terms of assembly, consists of a catalytic RNA component (M1 or rnpB) and a protein subunit.

The catalysed reaction is Endonucleolytic cleavage of RNA, removing 5'-extranucleotides from tRNA precursor.. In terms of biological role, RNaseP catalyzes the removal of the 5'-leader sequence from pre-tRNA to produce the mature 5'-terminus. It can also cleave other RNA substrates such as 4.5S RNA. The protein component plays an auxiliary but essential role in vivo by binding to the 5'-leader sequence and broadening the substrate specificity of the ribozyme. The chain is Ribonuclease P protein component from Nostoc punctiforme (strain ATCC 29133 / PCC 73102).